Consider the following 611-residue polypeptide: ATP-dependent zinc metalloprotease FtsH 1 (611 aa).

Residues 1-6 lie on the Cytoplasmic side of the membrane; it reads MNDNNK. The helical transmembrane segment at 7–27 threads the bilayer; that stretch reads IIRSMVLYLLIFIAIYAMVQL. Over 28–107 the chain is Extracellular; the sequence is YSQSTEPITD…KSEPQVGPPW (80 aa). A helical membrane pass occupies residues 108-128; it reads WVQMLPSLFLIVIFIIFWYIF. An ATP-binding site is contributed by 124 to 131; that stretch reads FWYIFMQQ. Over 129–611 the chain is Cytoplasmic; the sequence is MQQAQGGGGS…GEDIEGVQFA (483 aa). Residue His-423 participates in Zn(2+) binding. Glu-424 is an active-site residue. 2 residues coordinate Zn(2+): His-427 and Asp-499.

It in the central section; belongs to the AAA ATPase family. In the C-terminal section; belongs to the peptidase M41 family. As to quaternary structure, homohexamer. The cofactor is Zn(2+).

The protein localises to the cell membrane. Its function is as follows. Acts as a processive, ATP-dependent zinc metallopeptidase for both cytoplasmic and membrane proteins. Plays a role in the quality control of integral membrane proteins. The chain is ATP-dependent zinc metalloprotease FtsH 1 from Thermoanaerobacter sp. (strain X514).